Reading from the N-terminus, the 148-residue chain is Pivalyl-CoA mutase small subunit (148 aa).

The B12-binding domain occupies 8 to 138 (PLRVLVTKIG…TALGQKSRAE (131 aa)). Histidine 21 serves as a coordination point for adenosylcob(III)alamin.

The protein belongs to the acyl-CoA mutase small subunit family. As to quaternary structure, monomer in the absence of the PCM large subunit. Weakly interacts with the PCM large subunit; an alpha(2)beta(2) stoichiometry seems to represent the active state of the enzyme. Adenosylcob(III)alamin serves as cofactor.

It catalyses the reaction 3-methylbutanoyl-CoA = 2,2-dimethylpropanoyl-CoA. Functionally, together with Xaut_5043, catalyzes the reversible isomerization between pivalyl-CoA and isovaleryl-CoA, using radical chemistry. Does not exhibit isobutyryl-CoA mutase (ICM) activity. The sequence is that of Pivalyl-CoA mutase small subunit from Xanthobacter autotrophicus (strain ATCC BAA-1158 / Py2).